The sequence spans 454 residues: OTU domain-containing protein 1 (454 aa).

Disordered stretches follow at residues 36–64 (QSASPAAAAPEPDTGERPPAAATEPREAA) and 116–257 (LPPP…SRAD). Low complexity predominate over residues 52–64 (RPPAAATEPREAA). The segment covering 116-125 (LPPPSAPSPP) has biased composition (pro residues). 3 stretches are compositionally biased toward basic and acidic residues: residues 151–164 (DAPDRNFRLSEHRQ), 193–210 (GEERRAERSSRGWDRASG), and 219–229 (ALRRQDPEAEA). The OTU domain occupies 282–411 (KYRFHIIPDG…NGHYDAVFDH (130 aa)). Residues 287-293 (IIPDGNC) form a cys-loop region. The active site involves Asp-290. The Nucleophile role is filled by Cys-293. The his-loop stretch occupies residues 342–352 (AAQDGAWAGYP). Residues 399–404 (WLSNGH) form a variable-loop region. His-404 is a catalytic residue. The 20-residue stretch at 430–449 (KRDEELAKSMAISLSKMYIE) folds into the UIM domain.

It catalyses the reaction Thiol-dependent hydrolysis of ester, thioester, amide, peptide and isopeptide bonds formed by the C-terminal Gly of ubiquitin (a 76-residue protein attached to proteins as an intracellular targeting signal).. Deubiquitinating enzyme that specifically hydrolyzes 'Lys-63'-linked polyubiquitin to monoubiquitin. Required for the stability and translation of a subset mRNAs with a high abundance of rare codons by mediating deubiquitination of 40S ribosomal protein RPS10/eS10, thereby antagonizing ZNF598-mediated 40S ubiquitination. The abundance of rare codons in mRNAs can limit the translation rate and can lead to ribosome collisions that trigger activation of ribosome quality control (RQC) pathway by ZNF598. OTUD1-mediated deubiquitination prevents activation of the RQC and subsequent dissociation of ribosomes and stimulates formation of polysomes and translation. The sequence is that of OTU domain-containing protein 1 (Otud1) from Mus musculus (Mouse).